Here is a 382-residue protein sequence, read N- to C-terminus: Cytochrome b (382 aa).

The next 4 membrane-spanning stretches (helical) occupy residues 28-48 (YGFL…FLAS), 72-94 (WCFR…LHIL), 107-127 (SWIS…IGYV), and 169-189 (FFVL…IHIF). Residues His-78 and His-92 each coordinate heme b. The heme b site is built by His-173 and His-187. A ubiquinone is bound at residue His-192. The next 4 helical transmembrane spans lie at 214–234 (LLSL…LQSI), 274–294 (IPSK…LFLL), 317–337 (VPMI…CQLP), and 340–360 (IFIL…LFAL).

The protein belongs to the cytochrome b family. In terms of assembly, the main subunits of complex b-c1 are: cytochrome b, cytochrome c1 and the Rieske protein. Heme b is required as a cofactor.

It localises to the mitochondrion inner membrane. In terms of biological role, component of the ubiquinol-cytochrome c reductase complex (complex III or cytochrome b-c1 complex) that is part of the mitochondrial respiratory chain. The b-c1 complex mediates electron transfer from ubiquinol to cytochrome c. Contributes to the generation of a proton gradient across the mitochondrial membrane that is then used for ATP synthesis. In Plasmodium vivax (strain Salvador I), this protein is Cytochrome b (MT-CYB).